Reading from the N-terminus, the 858-residue chain is Protein VACUOLELESS1 (858 aa).

It belongs to the VPS16 family. In terms of assembly, core component of at least two putative endosomal tethering complexes, the homotypic fusion and vacuole protein sorting (HOPS) complex and the class C core vacuole/endosome tethering (CORVET) complex. Their common core is composed of the class C Vps proteins VPS11, VCL1, VPS18 and VPS33, which in HOPS further associates with VPS39 and VPS41 and in CORVET with VPS3. Expressed in roots, leaves, stems, siliques, flowers and mature pollen.

Its subcellular location is the vacuole membrane. It is found in the prevacuolar compartment membrane. Required for vacuole biogenesis and vacuole enlargment in dividing and expanding cells. Involved in the docking or fusion of prevacuolar vesicles. Important for the function of both male and female gametophytes, but is not essential for the germination and development of pollen. In Arabidopsis thaliana (Mouse-ear cress), this protein is Protein VACUOLELESS1 (VCL1).